A 423-amino-acid polypeptide reads, in one-letter code: Putative UPF0496 protein 5 (423 aa).

The span at 1–14 shows a compositional bias: basic residues; that stretch reads MGNRHGIMRPRRLA. A disordered region spans residues 1-37; it reads MGNRHGIMRPRRLASGRSAAEEEEDGEGEPGSYEAAC. Helical transmembrane passes span 224–244 and 247–267; these read IVFLTSFAALLVCSVVAAAIA and PVAAALAAAASMPVGSAGKWM.

This sequence belongs to the UPF0496 family.

Its subcellular location is the membrane. The polypeptide is Putative UPF0496 protein 5 (Oryza sativa subsp. japonica (Rice)).